Consider the following 201-residue polypeptide: Lymphocyte antigen 6 complex locus protein G5b (201 aa).

The first 18 residues, 1–18 (MKVHMLVGVLVMVGFTVG), serve as a signal peptide directing secretion. The 93-residue stretch at 26–118 (RTCHFCLVED…SPQLQSSLPE (93 aa)) folds into the UPAR/Ly6 domain. 5 disulfides stabilise this stretch: Cys-28–Cys-55, Cys-31–Cys-40, Cys-47–Cys-73, Cys-81–Cys-98, and Cys-99–Cys-104. 2 N-linked (GlcNAc...) asparagine glycosylation sites follow: Asn-141 and Asn-183.

As to quaternary structure, forms oligomer. N-glycosylated.

The protein localises to the secreted. This chain is Lymphocyte antigen 6 complex locus protein G5b (LY6G5B), found in Homo sapiens (Human).